The following is a 179-amino-acid chain: Ribosome maturation factor RimM (179 aa).

A PRC barrel domain is found at 99–174 (EEDEYYFDQI…IMIVDLPEGL (76 aa)).

This sequence belongs to the RimM family. Binds ribosomal protein uS19.

It localises to the cytoplasm. In terms of biological role, an accessory protein needed during the final step in the assembly of 30S ribosomal subunit, possibly for assembly of the head region. Essential for efficient processing of 16S rRNA. May be needed both before and after RbfA during the maturation of 16S rRNA. It has affinity for free ribosomal 30S subunits but not for 70S ribosomes. The polypeptide is Ribosome maturation factor RimM (Natranaerobius thermophilus (strain ATCC BAA-1301 / DSM 18059 / JW/NM-WN-LF)).